The chain runs to 370 residues: Glutamate 5-kinase (370 aa).

Lys-13 serves as a coordination point for ATP. Substrate contacts are provided by Ser-54, Asp-140, and Asn-152. ATP is bound by residues 172–173 (SD) and 214–220 (SGGMVTK). The region spanning 278–355 (TGTLVLDAGA…GEIEAILGFR (78 aa)) is the PUA domain.

It belongs to the glutamate 5-kinase family.

The protein resides in the cytoplasm. The catalysed reaction is L-glutamate + ATP = L-glutamyl 5-phosphate + ADP. It participates in amino-acid biosynthesis; L-proline biosynthesis; L-glutamate 5-semialdehyde from L-glutamate: step 1/2. In terms of biological role, catalyzes the transfer of a phosphate group to glutamate to form L-glutamate 5-phosphate. The protein is Glutamate 5-kinase of Paramagnetospirillum magneticum (strain ATCC 700264 / AMB-1) (Magnetospirillum magneticum).